We begin with the raw amino-acid sequence, 221 residues long: UPF0502 protein PSPTO_2686 (221 aa).

Belongs to the UPF0502 family.

This chain is UPF0502 protein PSPTO_2686, found in Pseudomonas syringae pv. tomato (strain ATCC BAA-871 / DC3000).